The primary structure comprises 530 residues: MPSNMKQFCKISVWLQQHDPDLLEIINNLCMLGNLSAAKYKHGVTFIYPKQAKIRDEIKKHAYSNDPSQAIKTLESLILPFYIPTPAEFTGEIGSYTGVKLEVEKTEANKVILKNGEAVLVPAADFKPFPDRRLAVWIMESGSMPLEGPPYKRKKEGGGNDPPVPKHISPYTPRTRIAIEVEKAFDDCMRQNWCSVNNPYLAKSVSLLSFLSLNHPTEFIKVLPLIDFDPLVTFYLLLEPYKTHGDDFLIPETILFGPTGWNGTDLYQSAMLEFKKFFTQITRQTFMDIADSATKEVDVPICYSDPETVHSYTNHVRTEILHHNAVNKVTTPNLVVQAYNELEQTNTIRHYGPIFPESTINALRFWKKLWQDEQRFVIHGLHRTLMDQPTYETSEFAEIVRNLRFSRPGNNYINELNITSPAMYGDKHTTGDIAPNDRFAMLVAFINSTDFLYTAIPEEKVGGNETQTSSLTDLVPTRLHSFLNHNLSKLKILNRAQQTVRNILSNDCLNQLKHYVKHTGKNEILKILQE.

This sequence belongs to the asfivirus polyprotein pp62 family. Monomer. Predominantly exists as a monomer, with very little dimers. Homodimerization seems to be linked to low pH. In terms of assembly, homodimer; disulfide-linked. Homotrimer; disulfide-linked. Homohexamer. Post-translationally, monoubiquitinated in vitro by viral UBCv1. Specific enzymatic cleavages in vivo yield mature proteins.

It localises to the host cytoplasm. The protein localises to the host perinuclear region. Its subcellular location is the virion. In terms of biological role, essential for the correct assembly and maturation of the core of the virion. Functionally, component of the core shell. Binds to phosphatidylserine, which may enable the core shell binding with the inner membrane. Its function is as follows. Component of the core shell. Binds to phosphatidylserine and DNA, which may link the core shell to the inner membrane and to the viral nucleoid. Component of the core shell. This is Polyprotein pp62 from Ornithodoros (relapsing fever ticks).